Reading from the N-terminus, the 480-residue chain is MTLSFTTHWRDELPDFYTSLLPTPLDNARLIWRNAPLAQQLGVPDALFAPENGAGVWGGEALLPGMSPLAQVYSGHQFGAWAGQLGDGRGILLGEQQLADGRRYDWHLKGAGLTPYSRMGDGRAVLRSTIRESLASEAMHALGIPTTRALAMVTSDTPIYRERVEPGAMLMRVAESHVRFGHFEHFYYRREPQKVQQLADYVIRHHWPQLQDEADKYLLWFRDVVTRTAQTIASWQTVGFAHGVMNTDNMSILGLTIDYGPYGFLDDFQPDFICNHSDYQGRYSFENQPAVGLWNLQRLAQSLSPFISAEALNAALDEYQHALLTAYGQRMRDKLGLFSQQKGDNDLLDGLFALMIREKSDYTRTFRLLSHSEQLSAASPLRDEFIDRAAFDSWFAGYRARLRDEQVDDAQRQQRMQGVNPALVLRNWLAQRAIEQAEAGDMGELERLHAALADPFTDREDDYVRRPPDWGKRLEVSCSS.

The ATP site is built by glycine 86, glycine 88, arginine 89, lysine 109, aspartate 121, glycine 122, arginine 172, and arginine 179. Aspartate 248 functions as the Proton acceptor in the catalytic mechanism. Mg(2+)-binding residues include asparagine 249 and aspartate 258. Aspartate 258 serves as a coordination point for ATP.

It belongs to the SELO family. Requires Mg(2+) as cofactor. Mn(2+) is required as a cofactor.

The enzyme catalyses L-seryl-[protein] + ATP = 3-O-(5'-adenylyl)-L-seryl-[protein] + diphosphate. It catalyses the reaction L-threonyl-[protein] + ATP = 3-O-(5'-adenylyl)-L-threonyl-[protein] + diphosphate. The catalysed reaction is L-tyrosyl-[protein] + ATP = O-(5'-adenylyl)-L-tyrosyl-[protein] + diphosphate. It carries out the reaction L-histidyl-[protein] + UTP = N(tele)-(5'-uridylyl)-L-histidyl-[protein] + diphosphate. The enzyme catalyses L-seryl-[protein] + UTP = O-(5'-uridylyl)-L-seryl-[protein] + diphosphate. It catalyses the reaction L-tyrosyl-[protein] + UTP = O-(5'-uridylyl)-L-tyrosyl-[protein] + diphosphate. Functionally, nucleotidyltransferase involved in the post-translational modification of proteins. It can catalyze the addition of adenosine monophosphate (AMP) or uridine monophosphate (UMP) to a protein, resulting in modifications known as AMPylation and UMPylation. This is Protein nucleotidyltransferase YdiU from Klebsiella pneumoniae (strain 342).